We begin with the raw amino-acid sequence, 1141 residues long: Serine-aspartate repeat-containing protein E (1141 aa).

An N-terminal signal peptide occupies residues 1 to 52 (MINRDNKKAITKKGMISNRLNKFSIRKYTVGTASILVGTTLIFGLGNQEAKA). The YSIRK-G/S signaling motif motif lies at 23 to 34 (FSIRKYTVGTAS). Residues 53-601 (AENTSTENAK…GDGTVKPEEK (549 aa)) form a ligand binding A region region. A disordered region spans residues 54–248 (ENTSTENAKQ…RSTKPVATAP (195 aa)). The span at 61–75 (AKQDDATTSDNKEVV) shows a compositional bias: basic and acidic residues. The span at 77–90 (ETENNSTTENDSTN) shows a compositional bias: low complexity. A compositionally biased stretch (basic and acidic residues) spans 92 to 108 (IKKETNTDSQPEAKEES). The span at 109-126 (TTSSTQQQQNNVTATTET) shows a compositional bias: low complexity. Positions 130 to 145 (NIEKENVKPSTDKTAT) are enriched in basic and acidic residues. Over residues 159–207 (NYTNNDVTTKPSTSEIQTKPTTPQESTNIENSQPQPTPSKVDNQVTDAT) the composition is skewed to polar residues. A compositionally biased stretch (basic and acidic residues) spans 216-241 (SKEELKNNPEKLKELVRNDNNTDRST). CNA-B domains lie at 602 to 714 (LYKI…YKEP), 715 to 824 (KYNL…YKTP), and 825 to 935 (KYSL…EEDT). A disordered region spans residues 929–1117 (GYFEEDTSDS…GSENNGSNNA (189 aa)). Residues 930–1080 (YFEEDTSDSD…DSDSDSDSDS (151 aa)) are compositionally biased toward acidic residues. An LPXTG sorting signal motif is present at residues 1104-1108 (LPETG). Threonine 1107 carries the pentaglycyl murein peptidoglycan amidated threonine modification. A propeptide spans 1108–1141 (GSENNGSNNATLFGGLFAALGSLLLFGRRKKQNK) (removed by sortase).

The protein belongs to the serine-aspartate repeat-containing protein (SDr) family. In terms of assembly, interacts with host complement factor H/CFAH (via C-terminus). Interacts with host complement regulator C4BPA.

The protein localises to the secreted. Its subcellular location is the cell wall. Cell surface-associated calcium-binding protein which plays an important role in adhesion and pathogenesis. Contributes to the resistance to killing by innate immune components in blood and thus attenuates bacterial clearance by interacting with host complement factor H/CFAH and modulating its activity. Inhibits also bacterial opsonization and killing by interacting with host complement regulator C4BPA and thus inhibiting classical complement pathway activation. The protein is Serine-aspartate repeat-containing protein E (sdrE) of Staphylococcus aureus (strain Mu50 / ATCC 700699).